We begin with the raw amino-acid sequence, 325 residues long: Elongation factor P--(R)-beta-lysine ligase (325 aa).

76–78 (SPE) contributes to the substrate binding site. ATP-binding positions include 100-102 (RNE) and Asn109. Tyr118 serves as a coordination point for substrate. Residue 244–245 (EL) participates in ATP binding. Residue Glu251 participates in substrate binding. Gly300 contacts ATP.

Belongs to the class-II aminoacyl-tRNA synthetase family. EpmA subfamily. Homodimer.

The catalysed reaction is D-beta-lysine + L-lysyl-[protein] + ATP = N(6)-((3R)-3,6-diaminohexanoyl)-L-lysyl-[protein] + AMP + diphosphate + H(+). Its function is as follows. With EpmB is involved in the beta-lysylation step of the post-translational modification of translation elongation factor P (EF-P). Catalyzes the ATP-dependent activation of (R)-beta-lysine produced by EpmB, forming a lysyl-adenylate, from which the beta-lysyl moiety is then transferred to the epsilon-amino group of a conserved specific lysine residue in EF-P. This chain is Elongation factor P--(R)-beta-lysine ligase, found in Klebsiella pneumoniae subsp. pneumoniae (strain ATCC 700721 / MGH 78578).